The following is a 660-amino-acid chain: Junctophilin-1 (660 aa).

The Cytoplasmic portion of the chain corresponds to 1 to 638 (MTGGRFDFDD…EKEANSGPNS (638 aa)). MORN repeat units follow at residues 14-36 (YCGG…KGQG), 38-59 (YSGS…SGNT), 60-82 (YQGY…KWMY), 106-128 (YEGT…DGGT), and 129-151 (YQGQ…PYGM). Serine 157, serine 216, and serine 220 each carry phosphoserine. The interval 228-247 (SKSSISSKRSSVRSDAAMSR) is disordered. MORN repeat units lie at residues 281–303 (YMGE…NGMK) and 304–326 (YEGE…DGSK). Residues 437–454 (NPEEKVLEKPPSPKESPH) are compositionally biased toward basic and acidic residues. The segment at 437-631 (NPEEKVLEKP…NDTCPSLEKE (195 aa)) is disordered. Phosphoserine is present on serine 452. Position 461 is a phosphothreonine (threonine 461). 3 positions are modified to phosphoserine: serine 465, serine 469, and serine 475. Residues 466–477 (PESSPKQSHSPQ) are compositionally biased toward low complexity. Composition is skewed to basic and acidic residues over residues 562–571 (PPEDREDDRG) and 598–612 (VAKE…KKSE). The helical; Anchor for type IV membrane protein transmembrane segment at 639–659 (IMIVLVMLLNIGLAILFVHFL) threads the bilayer.

Belongs to the junctophilin family. Specifically expressed in skeletal muscle. Weakly expressed in embryos and neonates. Abundant in young adult muscles.

Its subcellular location is the cell membrane. The protein localises to the endoplasmic reticulum membrane. It localises to the sarcoplasmic reticulum membrane. Junctophilins contribute to the formation of junctional membrane complexes (JMCs) which link the plasma membrane with the endoplasmic or sarcoplasmic reticulum in excitable cells. Provides a structural foundation for functional cross-talk between the cell surface and intracellular calcium release channels. JPH1 contributes to the construction of the skeletal muscle triad by linking the t-tubule (transverse-tubule) and SR (sarcoplasmic reticulum) membranes. The polypeptide is Junctophilin-1 (Jph1) (Mus musculus (Mouse)).